We begin with the raw amino-acid sequence, 142 residues long: Alpha-lactalbumin (142 aa).

Positions 1–19 (MMSFVSLLLVGILFHATQA) are cleaved as a signal peptide. One can recognise a C-type lysozyme domain in the interval 20–142 (EQLTKCEVFR…KLDQWLCEKL (123 aa)). 4 disulfides stabilise this stretch: Cys-25–Cys-139, Cys-47–Cys-130, Cys-80–Cys-96, and Cys-92–Cys-110. N-linked (GlcNAc...) asparagine glycosylation is present at Asn-64. Lys-98, Asp-101, Asp-103, Asp-106, and Asp-107 together coordinate Ca(2+).

The protein belongs to the glycosyl hydrolase 22 family. Lactose synthase (LS) is a heterodimer of a catalytic component, beta1,4-galactosyltransferase (beta4Gal-T1) and a regulatory component, alpha-lactalbumin (LA). As to expression, mammary gland specific. Secreted in milk.

It localises to the secreted. In terms of biological role, regulatory subunit of lactose synthase, changes the substrate specificity of galactosyltransferase in the mammary gland making glucose a good acceptor substrate for this enzyme. This enables LS to synthesize lactose, the major carbohydrate component of milk. In other tissues, galactosyltransferase transfers galactose onto the N-acetylglucosamine of the oligosaccharide chains in glycoproteins. The sequence is that of Alpha-lactalbumin (LALBA) from Bos taurus (Bovine).